Reading from the N-terminus, the 490-residue chain is MTIGSMENVEVFTSEGKGRGLKATKEFWAADVIFAERAYSAVVFDSLINFVCHTCFKRQEKLHRCGQCKFAHYCDRTCQKDAWLNHKNECAAIKKYGKVPNENIRLAARIMWRVEREGTGLTEGCLVSVDDLQNHVEHFGEEEQKELRVDVDTFLQYWPPQSQQFSMQYISHIFGVINCNGFTLSDQRGLQAVGVGIFPNLGLVNHDCWPNCTVIFNNGNHEAVKSMFHTQMRIELRALGKISEGEELTVSYIDFLHLSEERRRQLKKQYYFDCSCEHCQKGLKDDLFLAAKEDPKPSQEVVKEMIQFSKDTLEKIDKARSEGLYHEVVKLCRECLEKQEPVFADTNLYVLRLLSIASEVLSYLQAYEEASHYARRMVDGYMKLYHHNNAQLGMAVMRAGLTNWHAGHIEVGHGMICKAYAILLVTHGPSHPITKDLEAMRMQTEMELRMFRQNEFMYHKMREAALNNQPMQVMAEPSNEPAPALFHKKQ.

The SET domain maps to 7-253 (ENVEVFTSEG…EGEELTVSYI (247 aa)). 17–19 (KGR) contacts S-adenosyl-L-methionine. Positions 52, 55, 65, 68, 74, 78, 86, and 90 each coordinate Zn(2+). Residues 52–90 (CHTCFKRQEKLHRCGQCKFAHYCDRTCQKDAWLNHKNEC) form an MYND-type zinc finger. Residues His135 and 205–206 (NH) each bind S-adenosyl-L-methionine. Cys208 is a binding site for Zn(2+). 270 to 272 (YYF) is an S-adenosyl-L-methionine binding site. Zn(2+) is bound by residues Cys274, Cys276, and Cys279.

It belongs to the class V-like SAM-binding methyltransferase superfamily. As to quaternary structure, interacts with HDAC1, HDAC2 and HDAC3. Interacts (via MYND-type zinc finger) with NACA isoform skNAC. Expressed in cardiac and skeletal muscle, lymphocytes and thymus.

Its subcellular location is the cytoplasm. The protein resides in the nucleus. The enzyme catalyses L-lysyl(4)-[histone H3] + 3 S-adenosyl-L-methionine = N(6),N(6),N(6)-trimethyl-L-lysyl(4)-[histone H3] + 3 S-adenosyl-L-homocysteine + 3 H(+). Functionally, methylates histone H3 at 'Lys-4' (H3K4me). Acts as a transcriptional repressor. Essential for cardiomyocyte differentiation and cardiac morphogenesis. This is Histone-lysine N-methyltransferase Smyd1 (Smyd1) from Mus musculus (Mouse).